The sequence spans 667 residues: Small ribosomal subunit protein mS39 (667 aa).

Residues 1–11 constitute a mitochondrion transit peptide; sequence MASSCSQALRH. The disordered stretch occupies residues 199 to 226; sequence EAEQRSEEMEDIQDETQTKKGRSPKASD. PPR repeat units lie at residues 249 to 283, 284 to 323, 324 to 360, 361 to 400, 482 to 516, and 565 to 599; these read NTRS…RLKA, DVHI…KVKP, NLLT…SIEP, SLAS…SFTP, SSNA…GHGN, and TASS…NRVP.

The protein belongs to the mitochondrion-specific ribosomal protein mS39 family.

The protein localises to the mitochondrion. Functionally, mitochondrial RNA-binding protein that may have a role in mitochondrial translation. The protein is Small ribosomal subunit protein mS39 (ptcd3) of Danio rerio (Zebrafish).